The following is a 489-amino-acid chain: Phosphoglucosamine mutase (489 aa).

Ser136 (phosphoserine intermediate) is an active-site residue. Residues Ser136, Asp275, Asp277, and Asp279 each coordinate Mg(2+). Ser136 carries the phosphoserine modification.

This sequence belongs to the phosphohexose mutase family. The cofactor is Mg(2+). Post-translationally, activated by phosphorylation.

The enzyme catalyses alpha-D-glucosamine 1-phosphate = D-glucosamine 6-phosphate. In terms of biological role, catalyzes the conversion of glucosamine-6-phosphate to glucosamine-1-phosphate. The protein is Phosphoglucosamine mutase of Trichodesmium erythraeum (strain IMS101).